The chain runs to 365 residues: Cobalt-precorrin-5B C(1)-methyltransferase (365 aa).

Belongs to the CbiD family.

It carries out the reaction Co-precorrin-5B + S-adenosyl-L-methionine = Co-precorrin-6A + S-adenosyl-L-homocysteine. It functions in the pathway cofactor biosynthesis; adenosylcobalamin biosynthesis; cob(II)yrinate a,c-diamide from sirohydrochlorin (anaerobic route): step 6/10. In terms of biological role, catalyzes the methylation of C-1 in cobalt-precorrin-5B to form cobalt-precorrin-6A. The polypeptide is Cobalt-precorrin-5B C(1)-methyltransferase (Pseudomonas fluorescens (strain ATCC BAA-477 / NRRL B-23932 / Pf-5)).